We begin with the raw amino-acid sequence, 458 residues long: Argininosuccinate lyase (458 aa).

It belongs to the lyase 1 family. Argininosuccinate lyase subfamily.

The protein resides in the cytoplasm. It carries out the reaction 2-(N(omega)-L-arginino)succinate = fumarate + L-arginine. The protein operates within amino-acid biosynthesis; L-arginine biosynthesis; L-arginine from L-ornithine and carbamoyl phosphate: step 3/3. The chain is Argininosuccinate lyase from Salmonella heidelberg (strain SL476).